A 617-amino-acid polypeptide reads, in one-letter code: Syncytin-A (617 aa).

Residues 1-17 form the signal peptide; it reads MVRPWVFCLLLFPCSSA. Over 18-544 the chain is Extracellular; that stretch reads YSDSWMPLVN…WIQWLGLGPW (527 aa). An N-linked (GlcNAc...) asparagine glycan is attached at Asn27. The short motif at 44-47 is the CXXC element; it reads CWVC. Cystine bridges form between Cys44–Cys47, Cys44–Cys505, and Cys497–Cys504. N-linked (GlcNAc...) asparagine glycosylation is found at Asn272 and Asn365. The segment at 420 to 440 is fusion peptide; it reads LLPLLAGLGIASALGLGIAGI. Positions 497-505 match the CX6CC motif; sequence CLFLQEECC. The helical transmembrane segment at 545 to 565 threads the bilayer; it reads LPSWLTSLMAPILFILVLLVF. The Cytoplasmic segment spans residues 566–617; the sequence is RPCLLNCLTHSVSRRMSSFIHTTTEGHVDKILLLRESQYKRLPQEPPEEDAV.

This sequence belongs to the gamma type-C retroviral envelope protein family. The mature protein consists of a trimer of SU-TM heterodimers. The SU-TM heterodimers are attached by a labile interchain disulfide bond. Post-translationally, synthesized as an inactive precursor that is heavily N-glycosylated and processed likely by furin in the Golgi to yield the mature SU and TM proteins. The cleavage site between SU and TM requires the minimal sequence [KR]-X-[KR]-R. In terms of processing, the CXXC motif is highly conserved across a broad range of retroviral envelope proteins. It is thought to participate in the formation of a labile disulfide bond possibly with the CX6CC motif present in the transmembrane protein. Isomerization of the intersubunit disulfide bond to an SU intrachain disulfide bond is thought to occur upon receptor recognition in order to allow membrane fusion. As to expression, highly expressed in placenta where it localizes to syncytiotrophoblasts of the labyrinthine zona. Specifically localizes to syncytiotrophoblast layer I (SynT-I). Also detected at very low levels in hippocampus, brain, testis and ovary.

It is found in the cell membrane. In terms of biological role, this endogenous retroviral envelope protein has retained its original fusogenic properties. Together with Synb, participates in trophoblast fusion and the formation of a syncytium during placenta morphogenesis. Syna is essential for placental development and is specifically required for formation of syncytiotrophoblast layer I (SynT-I). Promotes muscle myoblast fusion. Does not have immunosuppressive activity. The chain is Syncytin-A from Mus musculus (Mouse).